A 2105-amino-acid polypeptide reads, in one-letter code: MAFTYRNPLEIAINKLPSKQTDQLLSLTTDEIEKTLEVTNRFFSFSITPEDQELLTKHGLTLAPIGFKAHSHPVSKMIENHLLYICVPSLLSSFKSVAFFSLRESKANSFLKMHSAFSHGKIKSMGMYNAIIDGKDKYRYGDVSFTSFRERVIGLRDQCLTRNKFPKIIFMHDELHFLSPFDIAYLFETIPEIDRVIATTVFPIELLFGDKVSKEPRVYTYKVHGSSFSFYPDGVASECYEQNLANSKWPFTCNGIQWANRRVRVTKLQSLFAHHVFSFDRGRACNDFNHFNKPGCLLSEEMRLLTKRFDKAVINRSTVSSLSTYMACLKTANAASAVAKLRQLEKRDLYPDELNFVYSFGEHFKNFGMRDDFDVSVLQWVKDKFCQVMPHFISASFFEPTEFHLNMRKLLNDLATKGIEVPLPTIVLDKVNFIETRFHARMFEVASAIGVNLDLLGKRFDFENESEEYFSENGYLFMPSKHNTDRNWILNSCPVRVDYSKLVRARRFRLKRDFVEEILKKRPPRTQLFLEFNKDFGGPVSFEKEEVEKKGEAATRVEDKAPHEPSCSNLSTEDGQGFEGSLPLDLISCFEQEEIRLPKRKRKNDCVFKAIAAHLGIETQDLLNFLVNEDISDELLDCIEEDKGLSHEMIEEVLVTKGLSMVYTSDFKEMAVLNRKYGVNGKMYCTIKGNHCELSSKECFIRLLKEGGNAQMSNENLNADSMFDLGKFVHNKERAVKLAKSMARGTTGLLNSFDPNFCKEVVGLSELFPDNFSSVVGLRLGFAGSGKTHKVLQWINYTPNVKRMFISPRRMLAEEVEGRLKGTACQVHTWETALRKIDGTFMEVFVDEIGLYPPGYLTLLQMCAFRRTVKGQSERFLKSKLAELSKTCLSLRCFGDPLQMRYYSAEDTNLLDKTHELDLMIKTIKHKYLLQGYRFGEWFQSLINMPTRIDSSEISIKFFADMSSVKSEDYGLVLVARREDIGVFAGRIPVATVSESQGMTIDKRVLICLDQNLFAGGANAAIVAITRSRVGFDFVLKGNTLKEIQRMSQKTIWQFILEKKRIPMERIVNMNPGASFYESPLDVGNSSIQDKASHDVFIMPFINLAEEEVDPEEICGDVIKPVEWFKCHVPVFDTDPMLAEIFDKVAAKEKREFQSILGMSNQFLDMEKNGCKIDILPFARQNVFPHHQASDDVTFWAGVQKRIRKSNWRREKTKFEEFEIQGRELLSEFLSMLPCEFKVNIKDIEEGEKSFLEKRKLKSEKMWANHSERSDIDWKLDHVFLFMKSQYCTKEGKMFTEAKAGQTLACFQHIVLFRFGPMLRAIESAFLRSCGDSYYIHSGKNFFCLDSFVTKNAEVFDGFSIESDYTAFDSSQDHVILAFEMALLQYLGVSKEFQLDYLRLKLTLGCRLGSLAIMRFTGEFCTFLFNTFANMLFTQLKYKIDPRKHRILFAGDDMCSLSSLKRRRGERATRLMKSFSLTAVEEVRKFPMFCGWYLSPYGIIKSPKLLWARIKMMSERQLLKECVDNYLFEAIFAYRLGERLYTILKEEDFEYHYLVIRFFVKNSKLLTGLSKSLIFEIGEGIGSEWQLSMSTTSSKRLNQQISRLMPSRHLNFIKMQPFSSQMFSIASNDLNQMSKCLKVRVMDSCCPTSSCLMTQKLTPLERRATSTNTYIMELFLLASKQCCPTSGEWKGGSLYMTVPVWTQKEVIYVPTYSDLSLTAVTLDSDQNIAYLQLMLIWQKGSGSEWILTVHNTNRTQSCLLLTLELHTGVSTQLDSWKPKQVIQDGLHRQSAAVKHLNTMKRSRWRSWITNHRCFWRKVHRMCILKKECSEGTRSGGRALSLPKGGQTQGQKKREDLGPSQRGLKDLGKMSLEDVLQLARRHRVGVYLWKTQIDPGKEILTVPPPESFKEGESFEGRELYLLLCNHYCKYLFGNIAVFGSSDKTQFPAVGFDTPPVHYNLTTTPKEGETEEQKKAREGSSGEKSKIWRIDLSNVVPELKTFAATSRQNSLNECTFRKLCEPFADLAREFLHERWSKGLATNIYKKWPKAFEKSPWVAFDFATGLKMNKLTPDEKQVIDRMTKRLFRTEGQKGVFEAGSESNLELEG.

The Alphavirus-like MT domain maps to 63–250 (APIGFKAHSH…EQNLANSKWP (188 aa)). A compositionally biased stretch (basic and acidic residues) spans 552–563 (EAATRVEDKAPH). Residues 552 to 575 (EAATRVEDKAPHEPSCSNLSTEDG) form a disordered region. Positions 753-929 (FDPNFCKEVV…MIKTIKHKYL (177 aa)) constitute a (+)RNA virus helicase ATP-binding domain. 781-788 (GFAGSGKT) contributes to the ATP binding site. A (+)RNA virus helicase C-terminal domain is found at 930–1067 (LQGYRFGEWF…EKKRIPMERI (138 aa)). Positions 1358 to 1466 (GFSIESDYTA…LSSLKRRRGE (109 aa)) constitute a RdRp catalytic domain. Positions 1585 to 1868 (WQLSMSTTSS…SQRGLKDLGK (284 aa)) are V-region. 2 disordered regions span residues 1832-1862 (TRSG…SQRG) and 1960-1980 (TTTP…GSSG). 2 stretches are compositionally biased toward basic and acidic residues: residues 1851–1862 (KKREDLGPSQRG) and 1964–1980 (KEGE…GSSG).

In terms of processing, the N-terminus of the coat protein is blocked.

It localises to the virion. It carries out the reaction RNA(n) + a ribonucleoside 5'-triphosphate = RNA(n+1) + diphosphate. It catalyses the reaction ATP + H2O = ADP + phosphate + H(+). In terms of biological role, replicates genomic RNA, and might as well transcribe a subgenomic RNA coding for coat protein. Coat protein: encapsidates the viral genome. Forms particles of very flexuous filaments, 619 nm long and 12 nm in width, with obvious cross-banding, helical symmetry and a pitch of c. 3.8 nm. Synthesis remains unclear: either by cleavage of the ORF1 polyprotein, or by translation of a subgenomic RNA. This chain is Genome polyprotein, found in Malus sylvestris (European crab apple).